The following is a 238-amino-acid chain: Small ribosomal subunit protein uS2c (238 aa).

Belongs to the universal ribosomal protein uS2 family.

The protein localises to the plastid. It localises to the chloroplast. This chain is Small ribosomal subunit protein uS2c (rps2), found in Nuphar advena (Common spatterdock).